Reading from the N-terminus, the 160-residue chain is Putative UPF0479 protein YBL113W-A (160 aa).

A run of 2 helical transmembrane segments spans residues 39-59 and 136-156; these read IVFC…KVLQ and VPMI…ISQH.

This sequence belongs to the UPF0479 family.

Its subcellular location is the membrane. The polypeptide is Putative UPF0479 protein YBL113W-A (Saccharomyces cerevisiae (strain ATCC 204508 / S288c) (Baker's yeast)).